We begin with the raw amino-acid sequence, 286 residues long: Meteorin-like protein (286 aa).

Positions 1 to 21 (MLSPFLAYLLSVVLLCRIARS) are cleaved as a signal peptide. Disulfide bonds link Cys-28-Cys-51, Cys-84-Cys-120, Cys-165-Cys-235, Cys-168-Cys-259, and Cys-178-Cys-281.

Belongs to the meteorin family.

Its subcellular location is the secreted. Its function is as follows. Hormone induced following exercise or cold exposure that promotes energy expenditure. Induced either in the skeletal muscle after exercise or in adipose tissue following cold exposure and is present in the circulation. Able to stimulate energy expenditure associated with the browning of the white fat depots and improves glucose tolerance. The sequence is that of Meteorin-like protein (metrnl) from Danio rerio (Zebrafish).